Consider the following 344-residue polypeptide: Methionine import ATP-binding protein MetN (344 aa).

The 240-residue stretch at Ile-2–Ile-241 folds into the ABC transporter domain. Gly-38–Ser-45 provides a ligand contact to ATP.

It belongs to the ABC transporter superfamily. Methionine importer (TC 3.A.1.24) family. As to quaternary structure, the complex is composed of two ATP-binding proteins (MetN), two transmembrane proteins (MetI) and a solute-binding protein (MetQ).

It localises to the cell inner membrane. The enzyme catalyses L-methionine(out) + ATP + H2O = L-methionine(in) + ADP + phosphate + H(+). It carries out the reaction D-methionine(out) + ATP + H2O = D-methionine(in) + ADP + phosphate + H(+). Functionally, part of the ABC transporter complex MetNIQ involved in methionine import. Responsible for energy coupling to the transport system. The protein is Methionine import ATP-binding protein MetN of Vibrio vulnificus (strain CMCP6).